A 140-amino-acid chain; its full sequence is uncharacterized protein (140 aa).

Over residues 1 to 15 (MQRQTGHMEDKKRTG) the composition is skewed to basic and acidic residues. The disordered stretch occupies residues 1 to 34 (MQRQTGHMEDKKRTGLESQGTENAFSDGRDGKDG).

This is an uncharacterized protein from Gallus gallus (Chicken).